Here is a 454-residue protein sequence, read N- to C-terminus: Chromosomal replication initiator protein DnaA (454 aa).

The tract at residues 1-71 (MTKEQWGQLQ…HEVRQEDPAV (71 aa)) is domain I, interacts with DnaA modulators. The tract at residues 71-112 (VRRLRFAVPSHVNATTKPARPAQATAPRAPAEKTPRSTLSTA) is domain II. The segment at 82-108 (VNATTKPARPAQATAPRAPAEKTPRST) is disordered. The span at 84–99 (ATTKPARPAQATAPRA) shows a compositional bias: low complexity. The interval 113-334 (PLDARFTFDN…GALTRLCAFA (222 aa)) is domain III, AAA+ region. ATP is bound by residues Gly157, Gly159, Lys160, and Thr161. The domain IV, binds dsDNA stretch occupies residues 335–454 (SLVGREIDME…LELLRRALEE (120 aa)).

The protein belongs to the DnaA family. In terms of assembly, oligomerizes as a right-handed, spiral filament on DNA at oriC.

Its subcellular location is the cytoplasm. In terms of biological role, plays an essential role in the initiation and regulation of chromosomal replication. ATP-DnaA binds to the origin of replication (oriC) to initiate formation of the DNA replication initiation complex once per cell cycle. Binds the DnaA box (a 9 base pair repeat at the origin) and separates the double-stranded (ds)DNA. Forms a right-handed helical filament on oriC DNA; dsDNA binds to the exterior of the filament while single-stranded (ss)DNA is stabiized in the filament's interior. The ATP-DnaA-oriC complex binds and stabilizes one strand of the AT-rich DNA unwinding element (DUE), permitting loading of DNA polymerase. After initiation quickly degrades to an ADP-DnaA complex that is not apt for DNA replication. Binds acidic phospholipids. The chain is Chromosomal replication initiator protein DnaA from Roseobacter denitrificans (strain ATCC 33942 / OCh 114) (Erythrobacter sp. (strain OCh 114)).